A 254-amino-acid chain; its full sequence is Bidirectional sugar transporter SWEET6b (254 aa).

Residues 1–9 (MISPDAARN) are Extracellular-facing. Residues 10–30 (VVGIIGNVISFGLFLAPVPTF) form a helical membrane-spanning segment. The MtN3/slv 1 domain maps to 10–98 (VVGIIGNVIS…IFFLYSPNKK (89 aa)). The Cytoplasmic portion of the chain corresponds to 31 to 45 (WRICKRKDVEEFKAD). Residues 46 to 66 (PYLATLLNCMLWVFYGIPIVH) form a helical membrane-spanning segment. Over 67–69 (PNS) the chain is Extracellular. Residues 70 to 90 (ILVVTINGIGLVVEGTYLFIF) traverse the membrane as a helical segment. Residues 91–101 (FLYSPNKKRLR) are Cytoplasmic-facing. Residues 102 to 122 (MLAVLGVELVFMLAVILGVLL) form a helical membrane-spanning segment. Residues 123-131 (GAHTHKKRS) lie on the Extracellular side of the membrane. Residues 132–152 (MIVGILCVFFGSIMYFSPLTI) form a helical membrane-spanning segment. The region spanning 133-216 (IVGILCVFFG…LILYACYYRT (84 aa)) is the MtN3/slv 2 domain. Residues 153–165 (MGKVIKTKSVEYM) are Cytoplasmic-facing. The chain crosses the membrane as a helical span at residues 166-186 (PFFLSLVCFLNGVCWTAYALI). Topologically, residues 187–189 (RFD) are extracellular. Residues 190 to 210 (IYVTIPNSLGAIFGAIQLILY) form a helical membrane-spanning segment. At 211 to 254 (ACYYRTTPKKTKAAKDVEMPSVISGPGAAATASGGSVVSVTVER) the chain is on the cytoplasmic side.

It belongs to the SWEET sugar transporter family. Forms homooligomers and/or heterooligomers.

The protein resides in the cell membrane. Mediates both low-affinity uptake and efflux of sugar across the plasma membrane. This Oryza sativa subsp. indica (Rice) protein is Bidirectional sugar transporter SWEET6b (SWEET6B).